Reading from the N-terminus, the 323-residue chain is Sphingolipid delta(4)-desaturase DES1 (323 aa).

The N-myristoyl glycine moiety is linked to residue glycine 2. 2 consecutive transmembrane segments (helical) span residues 41–61 (PNLI…FYIV) and 68–88 (WVIF…TLAI). The Histidine box-1 signature appears at 89-93 (HEIAH). Residues 102 to 122 (AMWNRWFGMFANLPIGIPYSI) traverse the membrane as a helical segment. Positions 128–132 (HMDHH) match the Histidine box-2 motif. The next 3 membrane-spanning stretches (helical) occupy residues 152–172 (FFCT…FYAF), 184–204 (YLEV…YYFL), and 209–229 (LVYM…SGHF). A Histidine box-3 motif is present at residues 259-263 (HNEHH). A Phosphoserine modification is found at serine 307.

Belongs to the fatty acid desaturase type 1 family. DEGS subfamily. As to quaternary structure, interacts with RLBP1; the interaction increases synthesis of chromophore-precursors by DEGS1. Post-translationally, myristoylation can target the enzyme to the mitochondria leading to an increase in ceramide levels. As to expression, ubiquitous.

It localises to the mitochondrion membrane. The protein resides in the endoplasmic reticulum membrane. It catalyses the reaction an N-acylsphinganine + 2 Fe(II)-[cytochrome b5] + O2 + 2 H(+) = an N-acylsphing-4-enine + 2 Fe(III)-[cytochrome b5] + 2 H2O. It carries out the reaction all-trans-retinol = 11-cis-retinol. The catalysed reaction is all-trans-retinol = 9-cis-retinol. The enzyme catalyses all-trans-retinol = 13-cis-retinol. It catalyses the reaction 11-cis-retinol = 13-cis-retinol. It carries out the reaction 11-cis-retinol = 9-cis-retinol. Functionally, has sphingolipid-delta-4-desaturase activity. Converts D-erythro-sphinganine to D-erythro-sphingosine (E-sphing-4-enine). Catalyzes the equilibrium isomerization of retinols. The sequence is that of Sphingolipid delta(4)-desaturase DES1 from Homo sapiens (Human).